The sequence spans 376 residues: Erythronate-4-phosphate dehydrogenase (376 aa).

The substrate site is built by S45 and T67. D147 lines the NAD(+) pocket. R209 is an active-site residue. D233 provides a ligand contact to NAD(+). The active site involves E238. The active-site Proton donor is the H255. Position 258 (G258) interacts with NAD(+). Y259 lines the substrate pocket.

The protein belongs to the D-isomer specific 2-hydroxyacid dehydrogenase family. PdxB subfamily. Homodimer.

The protein resides in the cytoplasm. The enzyme catalyses 4-phospho-D-erythronate + NAD(+) = (R)-3-hydroxy-2-oxo-4-phosphooxybutanoate + NADH + H(+). It functions in the pathway cofactor biosynthesis; pyridoxine 5'-phosphate biosynthesis; pyridoxine 5'-phosphate from D-erythrose 4-phosphate: step 2/5. In terms of biological role, catalyzes the oxidation of erythronate-4-phosphate to 3-hydroxy-2-oxo-4-phosphonooxybutanoate. This Shewanella sp. (strain MR-7) protein is Erythronate-4-phosphate dehydrogenase.